A 558-amino-acid polypeptide reads, in one-letter code: Zeta-carotene desaturase, chloroplastic/chromoplastic (558 aa).

The transit peptide at 1-27 directs the protein to the chloroplast and chromoplast; sequence MASSVVFAATGSLSVPPLKSRRFYVNS.

It belongs to the zeta carotene desaturase family. The cofactor is decylplastoquinone. 6-decylubiquinone serves as cofactor. Highly expressed in leaves. Expressed at low levels in flowers and siliques.

The protein localises to the plastid. It is found in the chloroplast. It localises to the chromoplast. It carries out the reaction 9,9'-di-cis-zeta-carotene + 2 a quinone = 7,7',9,9'-tetra-cis-lycopene + 2 a quinol. Its pathway is carotenoid biosynthesis; lycopene biosynthesis. Its function is as follows. Plays a crucial role in plant growth and development. Is essential for the biosynthesis of carotenoids. Carotenoids are involved in different physiological processes, including coloration, photoprotection, biosynthesis of abscisic acid (ABA) and chloroplast biogenesis. Catalyzes the conversion of zeta-carotene to lycopene via the intermediary of neurosporene. It carries out two consecutive desaturations (introduction of double bonds) at positions C-7 and C-7'. Shows stereoselectivity toward trans C15-C15'zeta-carotene double bond. The zeta-carotene produced by the phytoene desaturase PDS has a C15-C15' double bond in the cis configuration and it requires isomerization before being recognized as substrate by ZDS. The main product is 7,9,7',9'-tetra-cis-lycopene (pro-lycopene). This Arabidopsis thaliana (Mouse-ear cress) protein is Zeta-carotene desaturase, chloroplastic/chromoplastic.